Reading from the N-terminus, the 793-residue chain is Protein PAT1 homolog (793 aa).

Phosphoserine occurs at positions 200 and 208. Disordered regions lie at residues 203–256 (PPGS…TGNR) and 292–312 (MLQQPPHQNGLMPPQMQGSQN). Residues 219 to 242 (PYQSGGPQMGSPNFSPFPNLQPQL) show a composition bias toward polar residues. Phosphoserine occurs at positions 342 and 343. The segment at 476–501 (RPLLEVDPPNSAKFGNAEHKPTDKPL) is disordered. Basic and acidic residues predominate over residues 491-501 (NAEHKPTDKPL).

Interacts with MPK4 and SUMM2. Post-translationally, phosphorylated at Ser-208 by MPK4 upon flg22 elicitation. Phosphorylated at Ser-200, Ser-342 and Ser-343 upon flg22 elicitation.

The protein localises to the cytoplasm. Its subcellular location is the P-body. In terms of biological role, activator of mRNA decapping. Involved in mRNA decay via decapping. Involved in disease resistance in response to biotrophic and necrotrophic pathogens. Is part of a signaling pathway including MPK4 and the disease resistance protein SUMM2. The sequence is that of Protein PAT1 homolog from Arabidopsis thaliana (Mouse-ear cress).